Here is a 457-residue protein sequence, read N- to C-terminus: Polygalacturonase-2 (457 aa).

Positions methionine 1 to serine 24 are cleaved as a signal peptide. Residues asparagine 25 to asparagine 71 constitute a propeptide that is removed on maturation. 2 N-linked (GlcNAc...) asparagine glycosylation sites follow: asparagine 189 and asparagine 240. PbH1 repeat units lie at residues serine 228–asparagine 255 and threonine 256–serine 277. The active-site Proton donor is the aspartate 270. Asparagine 286 carries an N-linked (GlcNAc...) asparagine glycan. Residue histidine 293 is part of the active site. PbH1 repeat units lie at residues valine 309–threonine 330 and alanine 338–glutamine 359. An N-linked (GlcNAc...) asparagine glycan is attached at asparagine 311. Residues leucine 445 to tyrosine 457 constitute a propeptide that is removed on maturation.

Belongs to the glycosyl hydrolase 28 family. Monomer PG2 (isoenzymes PG2A and PG2B). Also forms heterodimers called polygalacturonase 1 (PG1) with the beta subunit GP1. Post-translationally, N-glycosylated. PG2B isozyme has a greater degree of glycosylation than PG2A. In terms of tissue distribution, expressed only in ripening fruits (at protein level).

The protein localises to the secreted. It localises to the extracellular space. It is found in the apoplast. Its subcellular location is the cell wall. It catalyses the reaction (1,4-alpha-D-galacturonosyl)n+m + H2O = (1,4-alpha-D-galacturonosyl)n + (1,4-alpha-D-galacturonosyl)m.. Its function is as follows. Catalytic subunit of the polygalacturonase isozyme 1 and 2 (PG1 and PG2). Acts in concert with the pectinesterase, in the ripening process. Is involved in cell wall metabolism, specifically in polyuronide degradation. The depolymerization and solubilization of cell wall polyuronides mediated by PG2 during ripening seems to be limited by the beta subunit GP1, probably by recruiting PG2 to form PG1. In Solanum lycopersicum (Tomato), this protein is Polygalacturonase-2 (PG2).